Reading from the N-terminus, the 145-residue chain is Acidic phospholipase A2 homolog textilotoxin C chain (145 aa).

The N-terminal stretch at 1 to 19 (MHPAHLLVLLGVYVSLLGA) is a signal peptide. Residues 20 to 27 (ARIPPLPL) constitute a propeptide that is removed on maturation. 7 cysteine pairs are disulfide-bonded: C38-C98, C54-C144, C56-C72, C71-C125, C78-C118, C87-C111, and C105-C116.

Belongs to the phospholipase A2 family. Group I subfamily. D49 sub-subfamily. Heterohexamer. 2 forms exist: 2 A or 2 B chains, 2 C chains and 2 covalently-linked D chains, and 1 A or 1 B, 1 C, 2 covalently-linked D chains and 2 differentially glycosylated covalently-linked D chains. Textilotoxin was originally described as pentameric. In terms of tissue distribution, expressed by the venom gland.

The protein resides in the secreted. Functionally, snake venom oligomeric phospholipase A2 that has potent presynaptic neurotoxicity. Chain C is not itself neurotoxic, but it is essential for the neurotoxicity of textilotoxin. Chain C possesses a very low phospholipase activity. The chain is Acidic phospholipase A2 homolog textilotoxin C chain from Pseudonaja textilis (Eastern brown snake).